Consider the following 341-residue polypeptide: tRNA N6-adenosine threonylcarbamoyltransferase (341 aa).

Residues His-111 and His-115 each coordinate Fe cation. Residues 134 to 138, Asp-167, Gly-180, and Asn-276 contribute to the substrate site; that span reads LVSGG. A Fe cation-binding site is contributed by Asp-304.

This sequence belongs to the KAE1 / TsaD family. Requires Fe(2+) as cofactor.

Its subcellular location is the cytoplasm. It carries out the reaction L-threonylcarbamoyladenylate + adenosine(37) in tRNA = N(6)-L-threonylcarbamoyladenosine(37) in tRNA + AMP + H(+). In terms of biological role, required for the formation of a threonylcarbamoyl group on adenosine at position 37 (t(6)A37) in tRNAs that read codons beginning with adenine. Is involved in the transfer of the threonylcarbamoyl moiety of threonylcarbamoyl-AMP (TC-AMP) to the N6 group of A37, together with TsaE and TsaB. TsaD likely plays a direct catalytic role in this reaction. The polypeptide is tRNA N6-adenosine threonylcarbamoyltransferase (Pseudomonas fluorescens (strain Pf0-1)).